A 345-amino-acid chain; its full sequence is D-alanine--D-alanine ligase (345 aa).

An ATP-grasp domain is found at 133-340 (KLYAKERGVK…IDYRYIHQIQ (208 aa)). 162–211 (PLIVKPLRLGSSIGVSIAKNRQELDYALDVAFEFDEAALLEPFMQGIKEY) lines the ATP pocket. Residues Asp-284, Glu-296, and Asn-298 each coordinate Mg(2+).

The protein belongs to the D-alanine--D-alanine ligase family. Requires Mg(2+) as cofactor. Mn(2+) is required as a cofactor.

It is found in the cytoplasm. It catalyses the reaction 2 D-alanine + ATP = D-alanyl-D-alanine + ADP + phosphate + H(+). It participates in cell wall biogenesis; peptidoglycan biosynthesis. Cell wall formation. In Wolinella succinogenes (strain ATCC 29543 / DSM 1740 / CCUG 13145 / JCM 31913 / LMG 7466 / NCTC 11488 / FDC 602W) (Vibrio succinogenes), this protein is D-alanine--D-alanine ligase.